A 468-amino-acid chain; its full sequence is Glutamate--tRNA ligase (468 aa).

Residues 8 to 18 (PSPTGFLHVGG) carry the 'HIGH' region motif. The Zn(2+) site is built by Cys97, Cys99, Cys124, and Asp126. The short motif at 236-240 (KLSKR) is the 'KMSKS' region element. Lys239 is a binding site for ATP.

The protein belongs to the class-I aminoacyl-tRNA synthetase family. Glutamate--tRNA ligase type 1 subfamily. As to quaternary structure, monomer. Zn(2+) serves as cofactor.

The protein localises to the cytoplasm. It catalyses the reaction tRNA(Glu) + L-glutamate + ATP = L-glutamyl-tRNA(Glu) + AMP + diphosphate. In terms of biological role, catalyzes the attachment of glutamate to tRNA(Glu) in a two-step reaction: glutamate is first activated by ATP to form Glu-AMP and then transferred to the acceptor end of tRNA(Glu). The polypeptide is Glutamate--tRNA ligase (Francisella tularensis subsp. novicida (strain U112)).